The sequence spans 199 residues: N-(5'-phosphoribosyl)anthranilate isomerase (199 aa).

Belongs to the TrpF family.

It carries out the reaction N-(5-phospho-beta-D-ribosyl)anthranilate = 1-(2-carboxyphenylamino)-1-deoxy-D-ribulose 5-phosphate. It functions in the pathway amino-acid biosynthesis; L-tryptophan biosynthesis; L-tryptophan from chorismate: step 3/5. The chain is N-(5'-phosphoribosyl)anthranilate isomerase from Streptococcus pneumoniae (strain ATCC BAA-255 / R6).